Consider the following 229-residue polypeptide: Putative N-acetylmannosamine-6-phosphate 2-epimerase (229 aa).

This sequence belongs to the NanE family.

It carries out the reaction an N-acyl-D-glucosamine 6-phosphate = an N-acyl-D-mannosamine 6-phosphate. The protein operates within amino-sugar metabolism; N-acetylneuraminate degradation; D-fructose 6-phosphate from N-acetylneuraminate: step 3/5. In terms of biological role, converts N-acetylmannosamine-6-phosphate (ManNAc-6-P) to N-acetylglucosamine-6-phosphate (GlcNAc-6-P). In Escherichia fergusonii (strain ATCC 35469 / DSM 13698 / CCUG 18766 / IAM 14443 / JCM 21226 / LMG 7866 / NBRC 102419 / NCTC 12128 / CDC 0568-73), this protein is Putative N-acetylmannosamine-6-phosphate 2-epimerase.